Consider the following 1187-residue polypeptide: Disease resistance protein TAO1 (1187 aa).

The TIR domain occupies 38 to 202 (WLHPVFLSFR…KISKDVSDVL (165 aa)). Residue Glu-113 is part of the active site. Residues 217-478 (EAHTTEITSL…FFRRERIETL (262 aa)) form the NB-ARC domain. LRR repeat units follow at residues 498–522 (DKSL…GLDI), 611–633 (SRKL…KFNP), 635–658 (FLVK…PIRN), 660–679 (KWMD…FSTA), 680–703 (TNLQ…IGNA), 704–727 (TNLL…IGNL), 728–750 (TNLK…SFGN), 752–775 (TSLK…IGNI), 799–823 (NTNL…MLNL), 824–849 (TRLE…VINL), 870–894 (ATNL…IWNI), 895–918 (TNLQ…VENA), 920–942 (NLQS…IWRI), and 953–974 (CSSL…LILD).

The enzyme catalyses NAD(+) + H2O = ADP-D-ribose + nicotinamide + H(+). In terms of biological role, TIR-NB-LRR receptor-like protein that contributes to disease resistance induced by the Pseudomonas syringae type III effector AvrB. Acts additively with RPM1 to generate a full disease resistance response to P.syringae expressing this type III effector. The chain is Disease resistance protein TAO1 from Arabidopsis thaliana (Mouse-ear cress).